The chain runs to 343 residues: Probable fructokinase-7 (343 aa).

Glycine 2 bears the N-acetylglycine mark.

This sequence belongs to the carbohydrate kinase PfkB family.

It catalyses the reaction D-fructose + ATP = D-fructose 6-phosphate + ADP + H(+). Its pathway is glycan biosynthesis; starch biosynthesis. In terms of biological role, may play an important role in maintaining the flux of carbon towards starch formation. The sequence is that of Probable fructokinase-7 from Arabidopsis thaliana (Mouse-ear cress).